The following is a 144-amino-acid chain: Large ribosomal subunit protein uL15 (144 aa).

The segment at 1 to 54 is disordered; sequence MRLNTLSPAPGRVTSRKRVGRGIGSGLGKTAGRGHKGLKSRSGGTVKPGFEGGQ. Positions 21 to 31 are enriched in gly residues; that stretch reads RGIGSGLGKTA.

This sequence belongs to the universal ribosomal protein uL15 family. In terms of assembly, part of the 50S ribosomal subunit.

Its function is as follows. Binds to the 23S rRNA. In Teredinibacter turnerae (strain ATCC 39867 / T7901), this protein is Large ribosomal subunit protein uL15.